Reading from the N-terminus, the 666-residue chain is DNA mismatch repair protein MutL (666 aa).

This sequence belongs to the DNA mismatch repair MutL/HexB family.

Functionally, this protein is involved in the repair of mismatches in DNA. It is required for dam-dependent methyl-directed DNA mismatch repair. May act as a 'molecular matchmaker', a protein that promotes the formation of a stable complex between two or more DNA-binding proteins in an ATP-dependent manner without itself being part of a final effector complex. This Clostridium botulinum (strain Loch Maree / Type A3) protein is DNA mismatch repair protein MutL.